Consider the following 296-residue polypeptide: GTPase Era (296 aa).

An Era-type G domain is found at 3 to 170; that stretch reads KSGFVTIVGR…KELMFKYIPE (168 aa). Residues 11–18 are G1; the sequence is GRPNVGKS. 11 to 18 contacts GTP; it reads GRPNVGKS. A G2 region spans residues 37–41; the sequence is QTTRN. The interval 58–61 is G3; it reads DTPG. GTP-binding positions include 58–62 and 120–123; these read DTPGI and NKID. Residues 120–123 form a G4 region; it reads NKID. Positions 149 to 151 are G5; the sequence is ISA. The region spanning 201 to 278 is the KH type-2 domain; sequence LSEEVPHGIA…YIRLWVKVKE (78 aa).

Belongs to the TRAFAC class TrmE-Era-EngA-EngB-Septin-like GTPase superfamily. Era GTPase family. In terms of assembly, monomer.

It localises to the cytoplasm. Its subcellular location is the cell membrane. An essential GTPase that binds both GDP and GTP, with rapid nucleotide exchange. Plays a role in 16S rRNA processing and 30S ribosomal subunit biogenesis and possibly also in cell cycle regulation and energy metabolism. The chain is GTPase Era from Clostridium botulinum (strain Loch Maree / Type A3).